We begin with the raw amino-acid sequence, 81 residues long: Photosystem I iron-sulfur center (81 aa).

4Fe-4S ferredoxin-type domains follow at residues 2–31 and 37–68; these read SHSV…MVPW and GQIA…VRVY. Cys-11, Cys-14, Cys-17, Cys-21, Cys-48, Cys-51, Cys-54, and Cys-58 together coordinate [4Fe-4S] cluster.

In terms of assembly, the cyanobacterial PSI reaction center is composed of one copy each of PsaA,B,C,D,E,F,I,J,K,L,M and X, and forms trimeric complexes. The cofactor is [4Fe-4S] cluster.

Its subcellular location is the cellular thylakoid membrane. It catalyses the reaction reduced [plastocyanin] + hnu + oxidized [2Fe-2S]-[ferredoxin] = oxidized [plastocyanin] + reduced [2Fe-2S]-[ferredoxin]. Apoprotein for the two 4Fe-4S centers FA and FB of photosystem I (PSI); essential for photochemical activity. FB is the terminal electron acceptor of PSI, donating electrons to ferredoxin. The C-terminus interacts with PsaA/B/D and helps assemble the protein into the PSI complex. Required for binding of PsaD and PsaE to PSI. PSI is a plastocyanin/cytochrome c6-ferredoxin oxidoreductase, converting photonic excitation into a charge separation, which transfers an electron from the donor P700 chlorophyll pair to the spectroscopically characterized acceptors A0, A1, FX, FA and FB in turn. The sequence is that of Photosystem I iron-sulfur center from Prochlorococcus marinus (strain SARG / CCMP1375 / SS120).